Consider the following 343-residue polypeptide: Ribosomal RNA small subunit methyltransferase C (343 aa).

Belongs to the methyltransferase superfamily. RsmC family. As to quaternary structure, monomer.

Its subcellular location is the cytoplasm. It catalyses the reaction guanosine(1207) in 16S rRNA + S-adenosyl-L-methionine = N(2)-methylguanosine(1207) in 16S rRNA + S-adenosyl-L-homocysteine + H(+). Functionally, specifically methylates the guanine in position 1207 of 16S rRNA in the 30S particle. The chain is Ribosomal RNA small subunit methyltransferase C from Escherichia coli (strain SMS-3-5 / SECEC).